The following is a 165-amino-acid chain: Crossover junction endodeoxyribonuclease RuvC (165 aa).

Active-site residues include Asp7, Glu67, and Asp140. Mg(2+)-binding residues include Asp7, Glu67, and Asp140.

It belongs to the RuvC family. As to quaternary structure, homodimer which binds Holliday junction (HJ) DNA. The HJ becomes 2-fold symmetrical on binding to RuvC with unstacked arms; it has a different conformation from HJ DNA in complex with RuvA. In the full resolvosome a probable DNA-RuvA(4)-RuvB(12)-RuvC(2) complex forms which resolves the HJ. The cofactor is Mg(2+).

The protein localises to the cytoplasm. The enzyme catalyses Endonucleolytic cleavage at a junction such as a reciprocal single-stranded crossover between two homologous DNA duplexes (Holliday junction).. Functionally, the RuvA-RuvB-RuvC complex processes Holliday junction (HJ) DNA during genetic recombination and DNA repair. Endonuclease that resolves HJ intermediates. Cleaves cruciform DNA by making single-stranded nicks across the HJ at symmetrical positions within the homologous arms, yielding a 5'-phosphate and a 3'-hydroxyl group; requires a central core of homology in the junction. The consensus cleavage sequence is 5'-(A/T)TT(C/G)-3'. Cleavage occurs on the 3'-side of the TT dinucleotide at the point of strand exchange. HJ branch migration catalyzed by RuvA-RuvB allows RuvC to scan DNA until it finds its consensus sequence, where it cleaves and resolves the cruciform DNA. This chain is Crossover junction endodeoxyribonuclease RuvC, found in Desulfitobacterium hafniense (strain DSM 10664 / DCB-2).